The following is a 261-amino-acid chain: Thiazole synthase (261 aa).

The active-site Schiff-base intermediate with DXP is the Lys-97. Residues Gly-158, 184 to 185 (AG), and 206 to 207 (AS) each bind 1-deoxy-D-xylulose 5-phosphate.

It belongs to the ThiG family. Homotetramer. Forms heterodimers with either ThiH or ThiS.

The protein resides in the cytoplasm. The enzyme catalyses [ThiS sulfur-carrier protein]-C-terminal-Gly-aminoethanethioate + 2-iminoacetate + 1-deoxy-D-xylulose 5-phosphate = [ThiS sulfur-carrier protein]-C-terminal Gly-Gly + 2-[(2R,5Z)-2-carboxy-4-methylthiazol-5(2H)-ylidene]ethyl phosphate + 2 H2O + H(+). It functions in the pathway cofactor biosynthesis; thiamine diphosphate biosynthesis. Catalyzes the rearrangement of 1-deoxy-D-xylulose 5-phosphate (DXP) to produce the thiazole phosphate moiety of thiamine. Sulfur is provided by the thiocarboxylate moiety of the carrier protein ThiS. In vitro, sulfur can be provided by H(2)S. The chain is Thiazole synthase from Corynebacterium diphtheriae (strain ATCC 700971 / NCTC 13129 / Biotype gravis).